The primary structure comprises 64 residues: Neurotoxin BmK-II (64 aa).

The 63-residue stretch at 2–64 (RDAYIAKPHN…VPIRIPGNCH (63 aa)) folds into the LCN-type CS-alpha/beta domain. Disulfide bonds link cysteine 12-cysteine 63, cysteine 16-cysteine 36, cysteine 22-cysteine 46, and cysteine 26-cysteine 48.

Belongs to the long (4 C-C) scorpion toxin superfamily. Sodium channel inhibitor family. Alpha subfamily. In terms of tissue distribution, expressed by the venom gland.

The protein localises to the secreted. Its function is as follows. Binds to sodium channels (Nav) and inhibits the inactivation of the activated channels, thereby blocking neuronal transmission. This toxin is active against mammals and insects. BmK-II is 6-fold less toxic than BmK-I. In Olivierus martensii (Manchurian scorpion), this protein is Neurotoxin BmK-II.